The primary structure comprises 179 residues: Ribosome maturation factor RimM (179 aa).

One can recognise a PRC barrel domain in the interval 102 to 179 (DGEYYWYQLE…EMKVDWDADF (78 aa)).

It belongs to the RimM family. In terms of assembly, binds ribosomal protein uS19.

Its subcellular location is the cytoplasm. Its function is as follows. An accessory protein needed during the final step in the assembly of 30S ribosomal subunit, possibly for assembly of the head region. Essential for efficient processing of 16S rRNA. May be needed both before and after RbfA during the maturation of 16S rRNA. It has affinity for free ribosomal 30S subunits but not for 70S ribosomes. The protein is Ribosome maturation factor RimM of Pseudomonas savastanoi pv. phaseolicola (strain 1448A / Race 6) (Pseudomonas syringae pv. phaseolicola (strain 1448A / Race 6)).